Here is a 111-residue protein sequence, read N- to C-terminus: V-type proton ATPase subunit G 2 (111 aa).

Belongs to the V-ATPase G subunit family. In terms of assembly, V-ATPase is a heteromultimeric enzyme composed of a peripheral catalytic V1 complex (components A to H) attached to an integral membrane V0 proton pore complex (components: a, c, c', c'' and d).

Its function is as follows. Catalytic subunit of the peripheral V1 complex of vacuolar ATPase (V-ATPase). V-ATPase is responsible for acidifying a variety of intracellular compartments in eukaryotic cells. The polypeptide is V-type proton ATPase subunit G 2 (VATG2) (Nicotiana tabacum (Common tobacco)).